The chain runs to 68 residues: Large ribosomal subunit protein uL29 (68 aa).

The protein belongs to the universal ribosomal protein uL29 family.

This is Large ribosomal subunit protein uL29 from Streptococcus agalactiae serotype Ia (strain ATCC 27591 / A909 / CDC SS700).